The following is a 239-amino-acid chain: Large ribosomal subunit protein uL1 (239 aa).

It belongs to the universal ribosomal protein uL1 family. In terms of assembly, part of the 50S ribosomal subunit.

Functionally, binds directly to 23S rRNA. The L1 stalk is quite mobile in the ribosome, and is involved in E site tRNA release. Its function is as follows. Protein L1 is also a translational repressor protein, it controls the translation of the L11 operon by binding to its mRNA. The chain is Large ribosomal subunit protein uL1 from Rickettsia bellii (strain OSU 85-389).